Consider the following 38-residue polypeptide: Large ribosomal subunit protein bL36 (38 aa).

The protein belongs to the bacterial ribosomal protein bL36 family.

This Polynucleobacter necessarius subsp. necessarius (strain STIR1) protein is Large ribosomal subunit protein bL36.